The sequence spans 420 residues: Serine hydroxymethyltransferase (420 aa).

(6S)-5,6,7,8-tetrahydrofolate contacts are provided by residues L121 and 125–127 (GHL). K230 bears the N6-(pyridoxal phosphate)lysine mark. (6S)-5,6,7,8-tetrahydrofolate contacts are provided by residues E246 and 354 to 356 (SPF).

It belongs to the SHMT family. In terms of assembly, homodimer. Pyridoxal 5'-phosphate is required as a cofactor.

It localises to the cytoplasm. It catalyses the reaction (6R)-5,10-methylene-5,6,7,8-tetrahydrofolate + glycine + H2O = (6S)-5,6,7,8-tetrahydrofolate + L-serine. It participates in one-carbon metabolism; tetrahydrofolate interconversion. Its pathway is amino-acid biosynthesis; glycine biosynthesis; glycine from L-serine: step 1/1. Functionally, catalyzes the reversible interconversion of serine and glycine with tetrahydrofolate (THF) serving as the one-carbon carrier. This reaction serves as the major source of one-carbon groups required for the biosynthesis of purines, thymidylate, methionine, and other important biomolecules. Also exhibits THF-independent aldolase activity toward beta-hydroxyamino acids, producing glycine and aldehydes, via a retro-aldol mechanism. This Rickettsia typhi (strain ATCC VR-144 / Wilmington) protein is Serine hydroxymethyltransferase.